Here is a 521-residue protein sequence, read N- to C-terminus: 2,3-bisphosphoglycerate-independent phosphoglycerate mutase 2 (521 aa).

Mn(2+) is bound by residues D20 and S70. The Phosphoserine intermediate role is filled by S70. Substrate-binding positions include H131, 161–162 (RD), R193, R199, 270–273 (RPDR), and K343. D410, H414, D451, H452, and H470 together coordinate Mn(2+).

This sequence belongs to the BPG-independent phosphoglycerate mutase family. The cofactor is Mn(2+).

It carries out the reaction (2R)-2-phosphoglycerate = (2R)-3-phosphoglycerate. It functions in the pathway carbohydrate degradation; glycolysis; pyruvate from D-glyceraldehyde 3-phosphate: step 3/5. Functionally, catalyzes the interconversion of 2-phosphoglycerate and 3-phosphoglycerate. In Methanosarcina acetivorans (strain ATCC 35395 / DSM 2834 / JCM 12185 / C2A), this protein is 2,3-bisphosphoglycerate-independent phosphoglycerate mutase 2.